The sequence spans 252 residues: Hydroxyacylglutathione hydrolase (252 aa).

Positions 54, 56, 58, 59, 111, 128, and 166 each coordinate Zn(2+).

The protein belongs to the metallo-beta-lactamase superfamily. Glyoxalase II family. In terms of assembly, monomer. It depends on Zn(2+) as a cofactor.

It catalyses the reaction an S-(2-hydroxyacyl)glutathione + H2O = a 2-hydroxy carboxylate + glutathione + H(+). It functions in the pathway secondary metabolite metabolism; methylglyoxal degradation; (R)-lactate from methylglyoxal: step 2/2. Its function is as follows. Thiolesterase that catalyzes the hydrolysis of S-D-lactoyl-glutathione to form glutathione and D-lactic acid. This is Hydroxyacylglutathione hydrolase from Photobacterium profundum (strain SS9).